Reading from the N-terminus, the 153-residue chain is SsrA-binding protein (153 aa).

This sequence belongs to the SmpB family.

It is found in the cytoplasm. Its function is as follows. Required for rescue of stalled ribosomes mediated by trans-translation. Binds to transfer-messenger RNA (tmRNA), required for stable association of tmRNA with ribosomes. tmRNA and SmpB together mimic tRNA shape, replacing the anticodon stem-loop with SmpB. tmRNA is encoded by the ssrA gene; the 2 termini fold to resemble tRNA(Ala) and it encodes a 'tag peptide', a short internal open reading frame. During trans-translation Ala-aminoacylated tmRNA acts like a tRNA, entering the A-site of stalled ribosomes, displacing the stalled mRNA. The ribosome then switches to translate the ORF on the tmRNA; the nascent peptide is terminated with the 'tag peptide' encoded by the tmRNA and targeted for degradation. The ribosome is freed to recommence translation, which seems to be the essential function of trans-translation. This is SsrA-binding protein from Orientia tsutsugamushi (strain Boryong) (Rickettsia tsutsugamushi).